Reading from the N-terminus, the 1026-residue chain is Multidrug resistance protein MdtC (1026 aa).

The next 11 helical transmembrane spans lie at 15–35, 333–353, 360–380, 387–407, 431–451, 463–483, 528–548, 853–873, 897–917, 953–973, and 984–1004; these read ILIA…LPVA, EVEE…FLFL, LIPA…MYLC, LSLM…IVVL, VGFT…PLLL, FAVT…TLTP, LVGV…IAIP, LILI…LYES, LFNA…IGIV, PIMM…LSGG, and ITIV…TPVV.

It belongs to the resistance-nodulation-cell division (RND) (TC 2.A.6) family. MdtC subfamily. Part of a tripartite efflux system composed of MdtA, MdtB and MdtC. MdtC forms a heteromultimer with MdtB.

The protein resides in the cell inner membrane. This chain is Multidrug resistance protein MdtC, found in Salmonella agona (strain SL483).